The primary structure comprises 133 residues: ATP synthase epsilon chain (133 aa).

Belongs to the ATPase epsilon chain family. As to quaternary structure, F-type ATPases have 2 components, CF(1) - the catalytic core - and CF(0) - the membrane proton channel. CF(1) has five subunits: alpha(3), beta(3), gamma(1), delta(1), epsilon(1). CF(0) has three main subunits: a, b and c.

It is found in the cell membrane. Produces ATP from ADP in the presence of a proton gradient across the membrane. The sequence is that of ATP synthase epsilon chain from Halalkalibacterium halodurans (strain ATCC BAA-125 / DSM 18197 / FERM 7344 / JCM 9153 / C-125) (Bacillus halodurans).